The following is a 269-amino-acid chain: Tryptophan synthase alpha chain (269 aa).

Active-site proton acceptor residues include E49 and D60.

It belongs to the TrpA family. Tetramer of two alpha and two beta chains.

It catalyses the reaction (1S,2R)-1-C-(indol-3-yl)glycerol 3-phosphate + L-serine = D-glyceraldehyde 3-phosphate + L-tryptophan + H2O. Its pathway is amino-acid biosynthesis; L-tryptophan biosynthesis; L-tryptophan from chorismate: step 5/5. The alpha subunit is responsible for the aldol cleavage of indoleglycerol phosphate to indole and glyceraldehyde 3-phosphate. This is Tryptophan synthase alpha chain from Pseudomonas putida (strain W619).